The primary structure comprises 1495 residues: DNA-directed RNA polymerase subunit 1 (1495 aa).

The protein belongs to the RNA polymerase beta' chain family.

It is found in the virion. It carries out the reaction RNA(n) + a ribonucleoside 5'-triphosphate = RNA(n+1) + diphosphate. Its function is as follows. DNA-dependent RNA polymerase catalyzes the transcription of DNA into RNA using the four ribonucleoside triphosphates as substrates. In Acanthamoeba polyphaga (Amoeba), this protein is DNA-directed RNA polymerase subunit 1 (RPO1).